Consider the following 242-residue polypeptide: Probable septum site-determining protein MinC (242 aa).

Residues Ala120–Pro135 are compositionally biased toward basic and acidic residues. Residues Ala120 to Arg144 are disordered.

This sequence belongs to the MinC family. In terms of assembly, interacts with MinD and FtsZ.

Its function is as follows. Cell division inhibitor that blocks the formation of polar Z ring septums. Rapidly oscillates between the poles of the cell to destabilize FtsZ filaments that have formed before they mature into polar Z rings. Prevents FtsZ polymerization. The chain is Probable septum site-determining protein MinC from Ectopseudomonas mendocina (strain ymp) (Pseudomonas mendocina).